A 469-amino-acid polypeptide reads, in one-letter code: ATP synthase subunit beta (469 aa).

155-162 provides a ligand contact to ATP; it reads GGAGVGKT.

Belongs to the ATPase alpha/beta chains family. In terms of assembly, F-type ATPases have 2 components, CF(1) - the catalytic core - and CF(0) - the membrane proton channel. CF(1) has five subunits: alpha(3), beta(3), gamma(1), delta(1), epsilon(1). CF(0) has three main subunits: a(1), b(2) and c(9-12). The alpha and beta chains form an alternating ring which encloses part of the gamma chain. CF(1) is attached to CF(0) by a central stalk formed by the gamma and epsilon chains, while a peripheral stalk is formed by the delta and b chains.

It is found in the cell inner membrane. It catalyses the reaction ATP + H2O + 4 H(+)(in) = ADP + phosphate + 5 H(+)(out). Produces ATP from ADP in the presence of a proton gradient across the membrane. The catalytic sites are hosted primarily by the beta subunits. The polypeptide is ATP synthase subunit beta (Syntrophobacter fumaroxidans (strain DSM 10017 / MPOB)).